Here is a 126-residue protein sequence, read N- to C-terminus: Holo-[acyl-carrier-protein] synthase (126 aa).

Positions 8 and 57 each coordinate Mg(2+).

Belongs to the P-Pant transferase superfamily. AcpS family. Requires Mg(2+) as cofactor.

Its subcellular location is the cytoplasm. The enzyme catalyses apo-[ACP] + CoA = holo-[ACP] + adenosine 3',5'-bisphosphate + H(+). Its function is as follows. Transfers the 4'-phosphopantetheine moiety from coenzyme A to a Ser of acyl-carrier-protein. The polypeptide is Holo-[acyl-carrier-protein] synthase (Halorhodospira halophila (strain DSM 244 / SL1) (Ectothiorhodospira halophila (strain DSM 244 / SL1))).